Here is a 303-residue protein sequence, read N- to C-terminus: Probable cell division protein WhiA (303 aa).

The H-T-H motif DNA-binding region spans 272–303 (SIQQLADSLSRPLTKSGVNHRLRKINKIADEL).

Belongs to the WhiA family.

In terms of biological role, involved in cell division and chromosome segregation. The polypeptide is Probable cell division protein WhiA (Streptococcus sanguinis (strain SK36)).